The sequence spans 275 residues: Glutamate racemase (275 aa).

Residues 12–13 and 44–45 each bind substrate; these read DS and YG. The active-site Proton donor/acceptor is the cysteine 75. Substrate is bound at residue 76–77; that stretch reads NT. The active-site Proton donor/acceptor is the cysteine 185. 186 to 187 is a binding site for substrate; the sequence is TH.

Belongs to the aspartate/glutamate racemases family.

The catalysed reaction is L-glutamate = D-glutamate. It functions in the pathway cell wall biogenesis; peptidoglycan biosynthesis. Functionally, provides the (R)-glutamate required for cell wall biosynthesis. The protein is Glutamate racemase of Mycolicibacterium paratuberculosis (strain ATCC BAA-968 / K-10) (Mycobacterium paratuberculosis).